The following is a 473-amino-acid chain: Adenosylhomocysteinase (473 aa).

Threonine 64, aspartate 139, and glutamate 199 together coordinate substrate. 200-202 contributes to the NAD(+) binding site; it reads TTT. Residues lysine 229 and aspartate 233 each coordinate substrate. NAD(+) contacts are provided by residues asparagine 234, 263 to 268, glutamate 286, asparagine 321, 342 to 344, and asparagine 387; these read GYGDVG and IGH.

It belongs to the adenosylhomocysteinase family. Requires NAD(+) as cofactor.

The protein resides in the cytoplasm. It carries out the reaction S-adenosyl-L-homocysteine + H2O = L-homocysteine + adenosine. It functions in the pathway amino-acid biosynthesis; L-homocysteine biosynthesis; L-homocysteine from S-adenosyl-L-homocysteine: step 1/1. May play a key role in the regulation of the intracellular concentration of adenosylhomocysteine. The chain is Adenosylhomocysteinase from Paraburkholderia phytofirmans (strain DSM 17436 / LMG 22146 / PsJN) (Burkholderia phytofirmans).